The following is a 135-amino-acid chain: Ribonuclease P protein component (135 aa).

The tract at residues 115–135 is disordered; that stretch reads ETEPVSPVSPTSLPQNERGSP. Polar residues predominate over residues 122 to 135; sequence VSPTSLPQNERGSP.

The protein belongs to the RnpA family. Consists of a catalytic RNA component (M1 or rnpB) and a protein subunit.

The enzyme catalyses Endonucleolytic cleavage of RNA, removing 5'-extranucleotides from tRNA precursor.. Its function is as follows. RNaseP catalyzes the removal of the 5'-leader sequence from pre-tRNA to produce the mature 5'-terminus. It can also cleave other RNA substrates such as 4.5S RNA. The protein component plays an auxiliary but essential role in vivo by binding to the 5'-leader sequence and broadening the substrate specificity of the ribozyme. The sequence is that of Ribonuclease P protein component from Chloroflexus aggregans (strain MD-66 / DSM 9485).